A 295-amino-acid polypeptide reads, in one-letter code: Epidermal growth factor-like protein 8 (295 aa).

Residues 1–25 (MGSRAELHTLLGGLSFLLLLMSGQG) form the signal peptide. The EMI domain occupies 34 to 112 (SQGVCSRQTL…RHPGALTCDE (79 aa)). 9 cysteine pairs are disulfide-bonded: Cys-38/Cys-97, Cys-65/Cys-71, Cys-96/Cys-110, Cys-115/Cys-125, Cys-119/Cys-131, Cys-133/Cys-142, Cys-149/Cys-160, Cys-156/Cys-169, and Cys-171/Cys-184. An N-linked (GlcNAc...) asparagine glycan is attached at Asn-50. The EGF-like 1 domain occupies 111–143 (DEAICAKPCQNGGVCVRPDQCECAPGWGGRHCH). Positions 145 to 185 (DVDECRTGVTLCSHRCHNTAGSFTCGCPHGLVLGPDGRTCA) constitute an EGF-like 2; calcium-binding domain. Residues 202 to 233 (VREAGREDRALRREIRELRGRLERLEQWAGQA) are a coiled coil.

The protein localises to the secreted. The polypeptide is Epidermal growth factor-like protein 8 (EGFL8) (Sus scrofa (Pig)).